A 224-amino-acid chain; its full sequence is Metalloproteinase inhibitor 4 (224 aa).

An N-terminal signal peptide occupies residues 1-29; the sequence is MPWSPLAALSWALVLRLLALLWPPGRGEA. Zn(2+) is bound at residue cysteine 30. Involved in metalloproteinase-binding stretches follow at residues 30–33 and 99–100; these read CSCA and SS. 6 disulfides stabilise this stretch: cysteine 30–cysteine 102, cysteine 32–cysteine 131, cysteine 42–cysteine 156, cysteine 158–cysteine 205, cysteine 163–cysteine 168, and cysteine 176–cysteine 197. An NTR domain is found at 30–156; it reads CSCAPAHPQQ…SLNHHYHQNC (127 aa).

The protein belongs to the protease inhibitor I35 (TIMP) family. In terms of tissue distribution, expressed in retina, smooth muscle, skin, pancreas, skeletal muscle, heart, brain, lung, kidney and testis. Not found in cartilage, spleen and liver.

The protein localises to the secreted. Functionally, complexes with metalloproteinases (such as collagenases) and irreversibly inactivates them by binding to their catalytic zinc cofactor. This is Metalloproteinase inhibitor 4 (Timp4) from Rattus norvegicus (Rat).